Consider the following 261-residue polypeptide: Early 31 kDa protein (261 aa).

The segment at 230 to 261 (INKYSADTDEEEEEEEDNAEDTEEEEEEEADQ) is disordered. A compositionally biased stretch (acidic residues) spans 236–261 (DTDEEEEEEEDNAEDTEEEEEEEADQ).

The polypeptide is Early 31 kDa protein (Frog virus 3 (isolate Goorha) (FV-3)).